Consider the following 563-residue polypeptide: PTS system fructose-specific EIIB'BC component (563 aa).

2 consecutive PTS EIIB type-2 domains span residues 1–85 (MKTL…KGHA) and 104–201 (KRVV…KAVA). The active-site Phosphocysteine intermediate; for EIIB activity is cysteine 112. Cysteine 112 carries the post-translational modification Phosphocysteine; by EIIA. The PTS EIIC type-2 domain occupies 226-561 (AYRHLLTGVS…KRPEVDAVAK (336 aa)). The next 9 membrane-spanning stretches (helical) occupy residues 236–256 (YMLP…AFGI), 274–294 (GGSA…FSIA), 304–324 (IGGM…IAGF), 349–369 (ILII…YLIG), 382–402 (WLQT…GGMM), 430–450 (MAAI…ATMV), 463–483 (GKAA…PFAA), 489–509 (VLPC…AIGA), and 518–538 (LFVL…VAII).

The protein resides in the cell inner membrane. The enzyme catalyses D-fructose(out) + N(pros)-phospho-L-histidyl-[protein] = D-fructose 1-phosphate(in) + L-histidyl-[protein]. In terms of biological role, the phosphoenolpyruvate-dependent sugar phosphotransferase system (sugar PTS), a major carbohydrate active transport system, catalyzes the phosphorylation of incoming sugar substrates concomitantly with their translocation across the cell membrane. The enzyme II FruAB PTS system is involved in fructose transport. The polypeptide is PTS system fructose-specific EIIB'BC component (Escherichia coli (strain K12)).